The following is a 480-amino-acid chain: Glutamyl-tRNA(Gln) amidotransferase subunit A (480 aa).

Catalysis depends on charge relay system residues K76 and S151. S175 acts as the Acyl-ester intermediate in catalysis.

It belongs to the amidase family. GatA subfamily. Heterotrimer of A, B and C subunits.

It catalyses the reaction L-glutamyl-tRNA(Gln) + L-glutamine + ATP + H2O = L-glutaminyl-tRNA(Gln) + L-glutamate + ADP + phosphate + H(+). Allows the formation of correctly charged Gln-tRNA(Gln) through the transamidation of misacylated Glu-tRNA(Gln) in organisms which lack glutaminyl-tRNA synthetase. The reaction takes place in the presence of glutamine and ATP through an activated gamma-phospho-Glu-tRNA(Gln). The polypeptide is Glutamyl-tRNA(Gln) amidotransferase subunit A (Exiguobacterium sibiricum (strain DSM 17290 / CCUG 55495 / CIP 109462 / JCM 13490 / 255-15)).